The sequence spans 979 residues: Ankycorbin (979 aa).

Methionine 1 is modified (N-acetylmethionine). A Phosphoserine modification is found at serine 11. 7 ANK repeats span residues 18-51 (KNDD…KHDS), 52-81 (EGKT…DVTA), 85-114 (SGHS…PAEN), 118-147 (SGKT…PINL), 151-180 (DGNI…DVNS), 184-213 (NGRT…DLSL), and 217-247 (LGHN…DADL). Basic and acidic residues predominate over residues 247-259 (LKTPTKPKQHDQV). Residues 247 to 299 (LKTPTKPKQHDQVSKISSERSGTPKKRKAPPPPISPTQLSDVSSPRSITSTPL) are disordered. Position 249 is a phosphothreonine (threonine 249). Positions 270 to 276 (PKKRKAP) match the Nuclear localization signal motif. 3 positions are modified to phosphoserine: serine 281, serine 286, and serine 293. A compositionally biased stretch (polar residues) spans 282 to 299 (PTQLSDVSSPRSITSTPL). Phosphothreonine is present on residues threonine 295 and threonine 297. Phosphoserine occurs at positions 300, 304, 318, 327, 329, 340, 341, and 358. Residues 349 to 374 (LVLLQAKVASLTLHNKELQDKLQAKS) are a coiled coil. 2 disordered regions span residues 392 to 429 (TQTD…TDND) and 446 to 467 (LESS…RTDT). Residues 430-943 (VIIRQLQDSL…CKKHHQEVIS (514 aa)) are a coiled coil. Over residues 446–457 (LESSEAEKKQLQ) the composition is skewed to basic and acidic residues. Over residues 458–467 (DELQSQRTDT) the composition is skewed to polar residues. Residues serine 513, serine 516, serine 667, serine 694, and serine 914 each carry the phosphoserine modification.

Interacts with PALLD. Associates with actin. However, does not bind F-actin directly. Highly expressed in testis, where it localizes to seminiferous tubules (at protein level). Expressed in ganglion cell layer and in Muller cell fibers of the retina (at protein level). In small intestine highly expressed at the apical and lateral borders of absorptive epithelia (at protein level). In liver highly expressed along the bile canaliculi (at protein level).

It localises to the cytoplasm. It is found in the cytoskeleton. Its subcellular location is the stress fiber. The protein resides in the cell cortex. The protein localises to the cell junction. It localises to the nucleus. Its function is as follows. Plays a role in actin regulation at the ectoplasmic specialization, a type of cell junction specific to testis. Important for establishment of sperm polarity and normal spermatid adhesion. May also promote integrity of Sertoli cell tight junctions at the blood-testis barrier. In Mus musculus (Mouse), this protein is Ankycorbin (Rai14).